The sequence spans 1341 residues: Subtilisin-like protease 2 (1341 aa).

Residues 1 to 18 (MLNIIYVVSLILIKFIFY) form the signal peptide. A propeptide spans 19-686 (KECNNNNNYY…KLYNNKYSFL (668 aa)) (inhibition peptide). Disordered stretches follow at residues 85–107 (EKKT…EKKK) and 143–171 (ADVS…NYKN). Asn165, Asn343, Asn449, Asn453, and Asn492 each carry an N-linked (GlcNAc...) asparagine glycan. The segment at 415–474 (KKSKKEKENTQQKGGNNPNVDINILNNNNNNNNNNNSNNNSNSMNDEEINYNNNNNNKES) is disordered. Low complexity predominate over residues 430–474 (NNPNVDINILNNNNNNNNNNNSNNNSNSMNDEEINYNNNNNNKES). Residues 499–530 (IYHNKNDNSYKNKKEGTGKNNDNNDPNNNNNK) are disordered. Basic and acidic residues predominate over residues 502-515 (NKNDNSYKNKKEGT). Over residues 517-530 (KNNDNNDPNNNNNK) the composition is skewed to low complexity. 3 N-linked (GlcNAc...) asparagine glycosylation sites follow: Asn550, Asn641, and Asn728. Topologically, residues 687–1136 (NKFLNIEPLI…LYNLYEYDSH (450 aa)) are extracellular. Residues 726-1019 (TWNLSIIRVF…DSLVNAEGAV (294 aa)) form the Peptidase S8 domain. Residues Asp754 and His797 each act as charge relay system in the active site. 4 N-linked (GlcNAc...) asparagine glycosylation sites follow: Asn820, Asn856, Asn892, and Asn950. Ser960 serves as the catalytic Charge relay system. N-linked (GlcNAc...) asparagine glycosylation is found at Asn1009 and Asn1105. A helical membrane pass occupies residues 1137–1157 (YLLASVILFFLALLSIFVGMI). The Cytoplasmic portion of the chain corresponds to 1158–1341 (YMKSRKHSDK…MNQLDDMFMK (184 aa)).

It belongs to the peptidase S8 family. Proteolytically cleaved at the N-terminus to generate a 74kDa intermediate which is further processed into a 72kDa form. The first maturation cleavage is autocatalytic, occurs in the ER and is necessary for the subsequent SUB2 trafficking to the microneme. The second cleavage may be mediated by PMX/plasmepsin X.

Its subcellular location is the cell membrane. The protein localises to the cytoplasmic vesicle. It is found in the secretory vesicle. The protein resides in the microneme membrane. The catalysed reaction is Hydrolysis of proteins with broad specificity for peptide bonds, and a preference for a large uncharged residue in P1. Hydrolyzes peptide amides.. With respect to regulation, activation may be calcium-dependent. Inhibited by the non-covalent interaction with the cleaved propeptide. Functionally, serine protease which plays an essential role in the shedding of AMA1, MSP1 and MSP7 from the surface of the invading merozoite; this step is essential for productive invasion and the release of the adhesion between the erythrocyte and the merozoite. May cleave TRAMP/PTTRAMP, thereby shedding TRAMP from the merozoite surface during erythrocyte invasion. The chain is Subtilisin-like protease 2 from Plasmodium falciparum (isolate 3D7).